Consider the following 486-residue polypeptide: 3-sulfolactaldehyde dehydrogenase (486 aa).

Residues 157–158 (WN), 181–184 (RPAS), and 234–235 (GS) each bind NADP(+). Catalysis depends on E256, which acts as the Proton acceptor. NADP(+) is bound at residue L257. C290 acts as the Nucleophile in catalysis. NADP(+) is bound at residue E387.

It belongs to the aldehyde dehydrogenase family.

The enzyme catalyses (2S)-3-sulfolactaldehyde + NADP(+) + H2O = (2S)-3-sulfolactate + NADPH + 2 H(+). The catalysed reaction is (2S)-3-sulfolactaldehyde + NAD(+) + H2O = (2S)-3-sulfolactate + NADH + 2 H(+). Catalyzes the oxidation of (2S)-3-sulfolactaldehyde to (2S)-3-sulfolactate, using both NAD(+) and NADP(+) as electron acceptors. Is involved in a degradation pathway of sulfoquinovose (SQ) that allows P.putida SQ1 to use SQ as the sole carbon and energy source for growth. The protein is 3-sulfolactaldehyde dehydrogenase of Pseudomonas putida (Arthrobacter siderocapsulatus).